Reading from the N-terminus, the 399-residue chain is Elongation factor Tu (399 aa).

One can recognise a tr-type G domain in the interval 10–204; that stretch reads KPHVNIGTIG…AVDTSIPEPE (195 aa). A G1 region spans residues 19 to 26; that stretch reads GHVDHGKT. 19–26 serves as a coordination point for GTP; it reads GHVDHGKT. Residue Thr26 participates in Mg(2+) binding. Residues 60–64 are G2; it reads GITIN. The G3 stretch occupies residues 81–84; sequence DCPG. GTP contacts are provided by residues 81-85 and 136-139; these read DCPGH and NKCD. Residues 136–139 are G4; that stretch reads NKCD. The G5 stretch occupies residues 174–176; the sequence is SGL.

The protein belongs to the TRAFAC class translation factor GTPase superfamily. Classic translation factor GTPase family. EF-Tu/EF-1A subfamily. In terms of assembly, monomer.

The protein localises to the cytoplasm. The enzyme catalyses GTP + H2O = GDP + phosphate + H(+). GTP hydrolase that promotes the GTP-dependent binding of aminoacyl-tRNA to the A-site of ribosomes during protein biosynthesis. In Prochlorococcus marinus (strain MIT 9303), this protein is Elongation factor Tu.